Here is a 393-residue protein sequence, read N- to C-terminus: Purine permease 14 (393 aa).

Ala-2 carries the post-translational modification N-acetylalanine. The next 10 helical transmembrane spans lie at 46-66 (WPTITISIIFVIIGQSIAKLL), 90-110 (TQSLLQTVGFPLLLLPFLIFI), 133-153 (LAVIYICIGIIMSVQGRLAAM), 161-181 (GVFTLIYTAQLFFTPIFAAFI), 189-209 (WVVISVILAIITGALTLSSSF), 225-245 (WAALFAGICFALLLCNIQNVF), 268-288 (VIIFSSLVATIISVVGLLIAG), 308-328 (VMAMVGQAVSWQVYWVGIVGL), 339-359 (VISVITWPIVSVLVVIFFNFM), and 363-383 (FDAFKGVALVTAVLSAAAYFF).

It belongs to the purine permeases (TC 2.A.7.14) family. As to expression, expressed in seedlings, leaves, embryos, ovules, seeds and the root and shoot meristems. In heart-stage embryos, detected in cells that failed to respond to cytokinins, including the prospective cotyledons.

It is found in the cell membrane. Purine permease implicated in ATP-dependent cytokinin translocation that controls the spatiotemporal landscape of cytokinin signaling. Depletes ligands from the apoplast, which leads to a suppression of the cytokinin response. This chain is Purine permease 14, found in Arabidopsis thaliana (Mouse-ear cress).